The chain runs to 147 residues: Large ribosomal subunit protein uL15 (147 aa).

Residues 1–20 (MTLRLNDLKPADGARTERTR) are compositionally biased toward basic and acidic residues. The segment at 1–61 (MTLRLNDLKP…GFEGGQTPMQ (61 aa)) is disordered. Over residues 23–33 (RGIGSGLGKTA) the composition is skewed to gly residues. Basic residues predominate over residues 34–47 (GRGHKGSFARKGGG).

Belongs to the universal ribosomal protein uL15 family. In terms of assembly, part of the 50S ribosomal subunit.

Functionally, binds to the 23S rRNA. The polypeptide is Large ribosomal subunit protein uL15 (Xanthomonas axonopodis pv. citri (strain 306)).